Consider the following 116-residue polypeptide: MRWRDRIAVLCFPPGLMLTVAALILFFIHMGVFASDVHNFCVIHNYDHMSFRYTVVLIFSQVISIGWAAMGSLYAEMTGDKFLRCFALTILILNGAMFFNRLCLEFLAINYREERH.

Residues 1 to 16 lie on the Cytoplasmic side of the membrane; sequence MRWRDRIAVLCFPPGL. A helical membrane pass occupies residues 17–38; the sequence is MLTVAALILFFIHMGVFASDVH. Topologically, residues 39–51 are extracellular; the sequence is NFCVIHNYDHMSF. The chain crosses the membrane as a helical span at residues 52–72; sequence RYTVVLIFSQVISIGWAAMGS. Over 73–84 the chain is Cytoplasmic; that stretch reads LYAEMTGDKFLR. A helical membrane pass occupies residues 85–107; it reads CFALTILILNGAMFFNRLCLEFL. Residues 108–116 are Extracellular-facing; sequence AINYREERH.

In terms of assembly, component of the CatSper complex or CatSpermasome composed of the core pore-forming members CATSPER1, CATSPER2, CATSPER3 and CATSPER4 as well as auxiliary members CATSPERB, CATSPERG, CATSPERD, CATSPERE, CATSPERZ, C2CD6/CATSPERT, SLCO6C1, TMEM249, TMEM262 and EFCAB9. HSPA1 may be an additional auxiliary complex member. The core complex members CATSPER1, CATSPER2, CATSPER3 and CATSPER4 form a heterotetrameric channel. The auxiliary CATSPERB, CATSPERG2, CATSPERD and CATSPERE subunits form a pavilion-like structure over the pore which stabilizes the complex through interactions with CATSPER4, CATSPER3, CATSPER1 and CATSPER2 respectively. SLCO6C1 interacts with CATSPERE and TMEM262/CATSPERH interacts with CATSPERB, further stabilizing the complex. C2CD6/CATSPERT interacts at least with CATSPERD and is required for targeting the CatSper complex in the flagellar membrane.

Its subcellular location is the cell projection. The protein resides in the cilium. It localises to the flagellum membrane. Its function is as follows. Auxiliary component of the CatSper complex, a complex involved in sperm cell hyperactivation. This chain is Cation channel sperm-associated auxiliary subunit TMEM262, found in Mus musculus (Mouse).